The sequence spans 205 residues: Pyridoxal 5'-phosphate synthase subunit PdxT (205 aa).

Residue 52 to 54 (GES) coordinates L-glutamine. Cysteine 84 serves as the catalytic Nucleophile. Residues arginine 116 and 145-146 (IR) each bind L-glutamine. Residues histidine 185 and glutamate 187 each act as charge relay system in the active site.

The protein belongs to the glutaminase PdxT/SNO family. In the presence of PdxS, forms a dodecamer of heterodimers. Only shows activity in the heterodimer.

It carries out the reaction aldehydo-D-ribose 5-phosphate + D-glyceraldehyde 3-phosphate + L-glutamine = pyridoxal 5'-phosphate + L-glutamate + phosphate + 3 H2O + H(+). It catalyses the reaction L-glutamine + H2O = L-glutamate + NH4(+). It participates in cofactor biosynthesis; pyridoxal 5'-phosphate biosynthesis. In terms of biological role, catalyzes the hydrolysis of glutamine to glutamate and ammonia as part of the biosynthesis of pyridoxal 5'-phosphate. The resulting ammonia molecule is channeled to the active site of PdxS. The chain is Pyridoxal 5'-phosphate synthase subunit PdxT from Staphylothermus marinus (strain ATCC 43588 / DSM 3639 / JCM 9404 / F1).